Reading from the N-terminus, the 1557-residue chain is Probable kinase PglW (1557 aa).

In terms of domain architecture, NERD spans 12–130; sequence SEFEHERRGL…VAEAVCFTDN (119 aa). Protein kinase domains follow at residues 195-490 and 530-816; these read ELER…LEVV and WEVR…KVFL. Residues 536–544 and lysine 564 each bind ATP; that span reads LGTGSTSRA. Disordered stretches follow at residues 615 to 634 and 821 to 861; these read DERD…RRRE and TVPS…QRDR. Low complexity predominate over residues 830–849; the sequence is PAAPADGAAPAEGAAAGIAD.

Belongs to the protein kinase superfamily. Ser/Thr protein kinase family.

BREX systems (bacteriophage exclusion) provide immunity against bacteriophage. Part of a type 2 BREX system. Previously called the phage growth limitation (Pgl) system, it confers protection against bacteriophage phiC31. The bacteria allows one cycle of phage infection, but subsequent cycles are impaired, protecting the original bacterial colony. The system undergoes high rates (10(-3) to 10(-4)) of phase reversion, i.e. loss and regain of phiC31 resistance. When the pglW-pglX-pglY-pglZ genes are transformed into a susceptible S.lividans (strain 1326) they confer resistance to infection by phage phiC31 and phiBT1; all 4 genes are necessary. The proteins has kinase domains and might bind DNA. Its function is as follows. Autophosphorylates when synthesized in vitro, cannot be expressed in E.coli. This chain is Probable kinase PglW, found in Streptomyces coelicolor (strain ATCC BAA-471 / A3(2) / M145).